A 248-amino-acid chain; its full sequence is Probable transcriptional regulatory protein MCA1220 (248 aa).

The protein belongs to the TACO1 family.

Its subcellular location is the cytoplasm. The polypeptide is Probable transcriptional regulatory protein MCA1220 (Methylococcus capsulatus (strain ATCC 33009 / NCIMB 11132 / Bath)).